Reading from the N-terminus, the 260-residue chain is Ubiquinone/menaquinone biosynthesis C-methyltransferase UbiE (260 aa).

Residues threonine 83, aspartate 104, and 132–133 (NA) contribute to the S-adenosyl-L-methionine site.

Belongs to the class I-like SAM-binding methyltransferase superfamily. MenG/UbiE family.

The enzyme catalyses a 2-demethylmenaquinol + S-adenosyl-L-methionine = a menaquinol + S-adenosyl-L-homocysteine + H(+). It carries out the reaction a 2-methoxy-6-(all-trans-polyprenyl)benzene-1,4-diol + S-adenosyl-L-methionine = a 5-methoxy-2-methyl-3-(all-trans-polyprenyl)benzene-1,4-diol + S-adenosyl-L-homocysteine + H(+). The protein operates within quinol/quinone metabolism; menaquinone biosynthesis; menaquinol from 1,4-dihydroxy-2-naphthoate: step 2/2. It participates in cofactor biosynthesis; ubiquinone biosynthesis. Methyltransferase required for the conversion of demethylmenaquinol (DMKH2) to menaquinol (MKH2) and the conversion of 2-polyprenyl-6-methoxy-1,4-benzoquinol (DDMQH2) to 2-polyprenyl-3-methyl-6-methoxy-1,4-benzoquinol (DMQH2). The protein is Ubiquinone/menaquinone biosynthesis C-methyltransferase UbiE of Bartonella bacilliformis (strain ATCC 35685 / KC583 / Herrer 020/F12,63).